Reading from the N-terminus, the 339-residue chain is MAKGLLMTYVLWALGGPVGLHHLYLGRDSHALLWMLTLGGGGLGWLWEFWKLPSFVAQANRVQSWKQRPEEERPPLSLLRFASQIVVGVYFGLVALVSLSSMDNFYIVGLPLAVGLGVLLVAAVGNQTSDFKNTLGAAFLTSPVFYGRPIAILPISLAASITAQKHRRYKASAGSETLSVRLYRVGLAYLAFTGPLAYSTMYNTAATINYVAETLGSFLSWFSFFPLLGRLVESVLLLPCRIWWLLVGGPGFNSSRFQEWEKLYEFVDSFQDEKLQLAHQVLGVPEGATNEEIHRSYRDLVKVWHPDHNRHQTEEAQRHFLEIQAAYEVLSQPKKPRAS.

A TM2 domain is found at 4 to 50; sequence GLLMTYVLWALGGPVGLHHLYLGRDSHALLWMLTLGGGGLGWLWEFW. Transmembrane regions (helical) follow at residues 5–25, 30–50, 81–101, 105–125, 135–155, 185–205, and 218–238; these read LLMT…HLYL, HALL…WEFW, FASQ…SLSS, FYIV…AAVG, LGAA…ILPI, VGLA…YNTA, and FLSW…VLLL. One can recognise a J domain in the interval 277–339; sequence LAHQVLGVPE…LSQPKKPRAS (63 aa).

The protein resides in the membrane. In terms of biological role, may function as a co-chaperone. This Mus musculus (Mouse) protein is DnaJ homolog subfamily C member 22 (Dnajc22).